A 289-amino-acid chain; its full sequence is uncharacterized protein (289 aa).

This is an uncharacterized protein from Homo sapiens (Human).